The chain runs to 362 residues: Protein indeterminate-domain 16 (362 aa).

Positions 1-22 are disordered; that stretch reads MELTQPIRENGDPQGHQLTDPD. C2H2-type zinc fingers lie at residues 39 to 61 and 82 to 112; these read YVCE…RRRH and YVCP…RRKH. The segment at 118–142 adopts a CCHC-type 1; atypical zinc-finger fold; it reads WVCERCSKGYAVQSDYKAHLKTCGS. Positions 120, 123, 136, 140, 147, 149, 162, and 166 each coordinate Zn(2+). A CCHC-type 2; atypical zinc finger spans residues 145–168; the sequence is HSCDCGRVFSRVESFIEHQDTCTI. Residues 155-167 form an SHR-binding region; the sequence is RVESFIEHQDTCT. The tract at residues 247–278 is disordered; sequence SAQARHNEKRETSLTKERANEEARKAEETRQE. The segment covering 251–278 has biased composition (basic and acidic residues); the sequence is RHNEKRETSLTKERANEEARKAEETRQE. Residues 252–319 adopt a coiled-coil conformation; the sequence is HNEKRETSLT…VREEAIKRIN (68 aa).

As to expression, highly expressed in leaves, hypocotyls, roots, vasculature of cotyledons, floral organs and in the endodermis and vasculaturenof inflorescence stems.

It is found in the nucleus. In terms of biological role, transcription factor regulating lateral organ morphogenesis and gravitropic responses. Has a redundant role with IDD14 in directing leaf and floral organ morphogenesis. Acts cooperatively with IDD15 to control silique and branche orientation. Involved in the establishment of auxin gradients through the regulation of auxin biosynthesis and transport. This is Protein indeterminate-domain 16 from Arabidopsis thaliana (Mouse-ear cress).